We begin with the raw amino-acid sequence, 292 residues long: RNA polymerase II transcriptional coactivator SUB1 (292 aa).

Disordered regions lie at residues 1 to 31 (MSYY…GGMP) and 117 to 292 (LLSD…SEEE). Residues 20 to 31 (LSNSNNNNGGMP) are compositionally biased toward low complexity. Phosphoserine is present on Ser-119. Composition is skewed to basic and acidic residues over residues 133–166 (NNDK…LEPR), 179–191 (PHEE…EREA), 204–240 (KQQE…KIAE), and 251–267 (AKKE…KDAN). Ser-268, Ser-269, and Ser-289 each carry phosphoserine.

It belongs to the transcriptional coactivator PC4 family.

The protein localises to the nucleus. Plays a role in the release of TFIIB from the transcription complex during transcription initiation. Binds to TFIIB and specifically inhibits the formation of the TBP-TFIIB-promoter complexes. The chain is RNA polymerase II transcriptional coactivator SUB1 (SUB1) from Saccharomyces cerevisiae (strain ATCC 204508 / S288c) (Baker's yeast).